We begin with the raw amino-acid sequence, 303 residues long: L(+)-tartrate dehydratase subunit alpha (303 aa).

3 residues coordinate iron-sulfur cluster: Cys-71, Cys-190, and Cys-277.

The protein belongs to the class-I fumarase family. In terms of assembly, tetramer of two alpha and two beta subunits. Iron-sulfur cluster serves as cofactor.

The catalysed reaction is (2R,3R)-tartrate = oxaloacetate + H2O. The chain is L(+)-tartrate dehydratase subunit alpha (ttdA) from Escherichia coli O6:K15:H31 (strain 536 / UPEC).